The following is a 1009-amino-acid chain: DENN domain-containing protein 1A (1009 aa).

The 133-residue stretch at 13-145 (FEVYVEVAYP…HKLPIPDPGV (133 aa)) folds into the uDENN domain. Positions 162–298 (ELPSIPENRN…VISSLKNRLK (137 aa)) constitute a cDENN domain. Residues 300–378 (VSTTTGDGVA…DGRLDLLNSG (79 aa)) form the dDENN domain. Positions 381 to 385 (FSDVF) match the FXDXF motif motif. The disordered stretch occupies residues 453–564 (DIAENGCAPT…TGPVPAPPDR (112 aa)). S473 is subject to Phosphoserine. Over residues 477–489 (EAKDPKLREDRRP) the composition is skewed to basic and acidic residues. Positions 500–509 (PRPHVVKRPK) are enriched in basic residues. T519 is subject to Phosphothreonine. A phosphoserine mark is found at S520, S523, S536, S538, and S546. The short motif at 569–578 (DLLEDVFSNL) is the Clathrin box element. S592 bears the Phosphoserine mark. A disordered region spans residues 648-714 (IPSKPPAASP…RKTPELGIVP (67 aa)). Phosphoserine is present on S749. Disordered regions lie at residues 796-831 (STLPSRPATPNVATPFTPQFSFPPAGTPTPFPQPPL) and 928-1009 (RSSA…ETFE). 2 stretches are compositionally biased toward pro residues: residues 820–831 (AGTPTPFPQPPL) and 945–957 (GDPPLLPPRPPQG). A compositionally biased stretch (basic and acidic residues) spans 972–983 (DPFEDLLQKTKQ). Over residues 986–997 (SPSPALAPAPDS) the composition is skewed to low complexity. Basic and acidic residues predominate over residues 999 to 1009 (EQLRKQWETFE).

Interacts with RAB35. Interacts with clathrin and with the adapter protein complex 2, AP-2. Interacts with ITSN1 and SH3GL2. Interacts (when phosphorylated) with YWHAE. In terms of processing, phosphorylated on serine and/or threonine in an Akt-dependent manner. Phosphorylation probably regulates the guanine nucleotide exchange factor (GEF) activity, possibly by disrupting an intramolecular interaction between the DENN domain and the C-terminus of the protein, thereby relieving the autoinhibition.

It localises to the cytoplasmic vesicle. The protein localises to the clathrin-coated vesicle membrane. It is found in the presynaptic cell membrane. The guanine nucleotide exchange factor (GEF) activity is autoinhibited. Autoinhibition may be the result of intramolecular interaction between the DENN domain and the C-terminus, which is disrupted upon phosphorylation. Activation is regulated by Akt activation. In terms of biological role, guanine nucleotide exchange factor (GEF) regulating clathrin-mediated endocytosis through RAB35 activation. Promotes the exchange of GDP to GTP, converting inactive GDP-bound RAB35 into its active GTP-bound form. Regulates clathrin-mediated endocytosis of synaptic vesicles and mediates exit from early endosomes. Binds phosphatidylinositol-phosphates (PtdInsPs), with some preference for PtdIns(3)P. In Homo sapiens (Human), this protein is DENN domain-containing protein 1A.